The sequence spans 31 residues: Unknown protein from spot 104 of 2D-PAGE of thylakoid (31 aa).

The protein localises to the plastid. The protein resides in the chloroplast thylakoid. This is Unknown protein from spot 104 of 2D-PAGE of thylakoid from Pisum sativum (Garden pea).